A 116-amino-acid chain; its full sequence is Nucleoid-associated protein P9515_00191 (116 aa).

The span at 89 to 98 (STTTMKERMN) shows a compositional bias: basic and acidic residues. The interval 89-116 (STTTMKERMNDLTGGLNLNLPGLDNNDS) is disordered. The span at 99–116 (DLTGGLNLNLPGLDNNDS) shows a compositional bias: low complexity.

It belongs to the YbaB/EbfC family. As to quaternary structure, homodimer.

The protein resides in the cytoplasm. It is found in the nucleoid. Binds to DNA and alters its conformation. May be involved in regulation of gene expression, nucleoid organization and DNA protection. In Prochlorococcus marinus (strain MIT 9515), this protein is Nucleoid-associated protein P9515_00191.